We begin with the raw amino-acid sequence, 346 residues long: Elongation factor Ts (346 aa).

The interval 80 to 83 (TDFV) is involved in Mg(2+) ion dislocation from EF-Tu.

This sequence belongs to the EF-Ts family.

Its subcellular location is the cytoplasm. Functionally, associates with the EF-Tu.GDP complex and induces the exchange of GDP to GTP. It remains bound to the aminoacyl-tRNA.EF-Tu.GTP complex up to the GTP hydrolysis stage on the ribosome. In Streptococcus pneumoniae (strain ATCC BAA-255 / R6), this protein is Elongation factor Ts (tsf).